The primary structure comprises 552 residues: Lysine--tRNA ligase (552 aa).

A 'HIGH' region motif is present at residues 71–79; that stretch reads PSGLPHLGT. Positions 319–323 match the 'KMSKS' region motif; it reads KISKS. Lys322 is an ATP binding site.

Belongs to the class-I aminoacyl-tRNA synthetase family.

It localises to the cytoplasm. The catalysed reaction is tRNA(Lys) + L-lysine + ATP = L-lysyl-tRNA(Lys) + AMP + diphosphate. This Caulobacter sp. (strain K31) protein is Lysine--tRNA ligase.